We begin with the raw amino-acid sequence, 356 residues long: DNA polymerase IV (356 aa).

The UmuC domain maps to 6 to 186 (IVHIDMDAFY…LPVDAFHGIG (181 aa)). Asp10 and Asp104 together coordinate Mg(2+). Glu105 is a catalytic residue.

The protein belongs to the DNA polymerase type-Y family. In terms of assembly, monomer. It depends on Mg(2+) as a cofactor.

Its subcellular location is the cytoplasm. It carries out the reaction DNA(n) + a 2'-deoxyribonucleoside 5'-triphosphate = DNA(n+1) + diphosphate. Its function is as follows. Poorly processive, error-prone DNA polymerase involved in untargeted mutagenesis. Copies undamaged DNA at stalled replication forks, which arise in vivo from mismatched or misaligned primer ends. These misaligned primers can be extended by PolIV. Exhibits no 3'-5' exonuclease (proofreading) activity. May be involved in translesional synthesis, in conjunction with the beta clamp from PolIII. This is DNA polymerase IV from Gluconobacter oxydans (strain 621H) (Gluconobacter suboxydans).